A 526-amino-acid polypeptide reads, in one-letter code: MLO-like protein 1 (526 aa).

Residues 1 to 11 lie on the Extracellular side of the membrane; sequence MGHGGEGMSLE. A helical transmembrane segment spans residues 12–32; sequence FTPTWVVAGVCTVIVAISLAV. The Cytoplasmic segment spans residues 33-61; that stretch reads ERLLHYFGTVLKKKKQKPLYEALQKVKEE. The helical transmembrane segment at 62–82 threads the bilayer; sequence LMLLGFISLLLTVFQGLISKF. The Extracellular portion of the chain corresponds to 83 to 160; it reads CVKENVLMHM…LSLEALHHLH (78 aa). Residues 161 to 181 form a helical membrane-spanning segment; the sequence is IFIFVLAISHVTFCVLTVIFG. Residues 182-287 are Cytoplasmic-facing; the sequence is STRIHQWKKW…MRALEDDFKQ (106 aa). 2 helical membrane-spanning segments follow: residues 288–308 and 309–329; these read VVGISWYLWIFVVIFLLLNVN and GWHTYFWIAFIPFALLLAVGT. Residues 330–372 are Cytoplasmic-facing; sequence KLEHVIAQLAHEVAEKHVAIEGDLVVKPSDEHFWFSKPQIVLY. A helical membrane pass occupies residues 373–393; the sequence is LIHFILFQNAFEIAFFFWIWV. Topologically, residues 394–412 are extracellular; sequence TYGFDSCIMGQVRYIVPRL. A helical transmembrane segment spans residues 413-433; the sequence is VIGVFIQVLCSYSTLPLYAIV. Over 434–526 the chain is Cytoplasmic; sequence SQMGSSFKKA…NNEITPDHNN (93 aa). The interval 447–468 is calmodulin-binding; the sequence is ENVQVGLVGWAQKVKQKRDLKA. Positions 471 to 526 are disordered; it reads SNGDEGSSQAGPGPDSGSGSAPAAGPGAGFAGIQLSRVTRNNAGDTNNEITPDHNN. Low complexity predominate over residues 476-495; that stretch reads GSSQAGPGPDSGSGSAPAAG. Polar residues predominate over residues 506–520; sequence SRVTRNNAGDTNNEI.

Belongs to the MLO family.

It localises to the cell membrane. Its function is as follows. May be involved in modulation of pathogen defense and leaf cell death. Activity seems to be regulated by Ca(2+)-dependent calmodulin binding and seems not to require heterotrimeric G proteins. The polypeptide is MLO-like protein 1 (MLO1) (Arabidopsis thaliana (Mouse-ear cress)).